A 500-amino-acid chain; its full sequence is Probable malate:quinone oxidoreductase (500 aa).

It belongs to the MQO family. It depends on FAD as a cofactor.

It carries out the reaction (S)-malate + a quinone = a quinol + oxaloacetate. Its pathway is carbohydrate metabolism; tricarboxylic acid cycle; oxaloacetate from (S)-malate (quinone route): step 1/1. The protein is Probable malate:quinone oxidoreductase of Bacillus cereus (strain AH187).